The following is a 534-amino-acid chain: 2,3-bisphosphoglycerate-independent phosphoglycerate mutase (534 aa).

Residues Asp-15 and Ser-65 each contribute to the Mn(2+) site. The active-site Phosphoserine intermediate is Ser-65. Substrate is bound by residues His-126, 156-157 (RD), Arg-188, Arg-194, 261-264 (RPDR), and Lys-334. Mn(2+)-binding residues include Asp-401, His-405, Asp-442, His-443, and His-460.

The protein belongs to the BPG-independent phosphoglycerate mutase family. Requires Mn(2+) as cofactor.

It localises to the plastid. The protein resides in the chloroplast. The enzyme catalyses (2R)-2-phosphoglycerate = (2R)-3-phosphoglycerate. It participates in carbohydrate degradation; glycolysis; pyruvate from D-glyceraldehyde 3-phosphate: step 3/5. Its function is as follows. Catalyzes the interconversion of 2-phosphoglycerate and 3-phosphoglycerate. This Pyropia yezoensis (Susabi-nori) protein is 2,3-bisphosphoglycerate-independent phosphoglycerate mutase.